Here is a 314-residue protein sequence, read N- to C-terminus: Peroxidase 2 (314 aa).

An N-terminal signal peptide occupies residues 1–23 (MASASSVSLMLLVAAAMASAASA). Q24 is modified (pyrrolidone carboxylic acid). Disulfide bonds link C34-C109, C67-C72, C115-C310, and C194-C219. Catalysis depends on H65, which acts as the Proton acceptor. The Ca(2+) site is built by D66, V69, G71, D73, and S75. N148 carries an N-linked (GlcNAc...) asparagine glycan. Residue P157 coordinates substrate. Residue N169 is glycosylated (N-linked (GlcNAc...) asparagine). Position 187 (H187) interacts with heme b. T188 contributes to the Ca(2+) binding site. Residue N203 is glycosylated (N-linked (GlcNAc...) asparagine). Positions 234, 237, and 242 each coordinate Ca(2+). N-linked (GlcNAc...) asparagine glycans are attached at residues N274 and N309.

It belongs to the peroxidase family. Classical plant (class III) peroxidase subfamily. It depends on Ca(2+) as a cofactor. Requires heme b as cofactor.

The protein resides in the secreted. It carries out the reaction 2 a phenolic donor + H2O2 = 2 a phenolic radical donor + 2 H2O. Its function is as follows. Removal of H(2)O(2), oxidation of toxic reductants, biosynthesis and degradation of lignin, suberization, auxin catabolism, response to environmental stresses such as wounding, pathogen attack and oxidative stress. These functions might be dependent on each isozyme/isoform in each plant tissue. The polypeptide is Peroxidase 2 (PRX112) (Oryza sativa subsp. japonica (Rice)).